Reading from the N-terminus, the 348-residue chain is MIGSVLQKVVAGQILDIDEAMEAMSAIMTGEATPAQIAALVTALRMRGERETEIAGFVKGLRAHMIPVELQLAQPVIDVVGTGGDGNRTFNISTATAFVVAGAGVPVAKHGNRAMSSRAGSADVLEALGVRIDLNPSAVARCVEEAGIGFMFAQRFHPALRHAAPVRRELGFRTVFNVLGPLANPARVRYQLLGVAMPELVETVARVLALLDVEHALVVHSADGLDEISLGAPTTVYEVRRNGTVEVRRWTLEPESLGLERVPSDALRGGTAEENARIVRAVLEGARGPARDVVLLNAAAALVAADAAQSLAEGLELARHAIDSGAALDRLERLKVLSNALAEAEVPS.

Residues glycine 81, 84–85, threonine 89, 91–94, 109–117, and serine 121 contribute to the 5-phospho-alpha-D-ribose 1-diphosphate site; these read GD, NIST, and KHGNRAMSS. Position 81 (glycine 81) interacts with anthranilate. Serine 93 is a binding site for Mg(2+). Residue asparagine 112 coordinates anthranilate. Arginine 167 provides a ligand contact to anthranilate. The Mg(2+) site is built by aspartate 226 and glutamate 227.

It belongs to the anthranilate phosphoribosyltransferase family. In terms of assembly, homodimer. Mg(2+) serves as cofactor.

The catalysed reaction is N-(5-phospho-beta-D-ribosyl)anthranilate + diphosphate = 5-phospho-alpha-D-ribose 1-diphosphate + anthranilate. It functions in the pathway amino-acid biosynthesis; L-tryptophan biosynthesis; L-tryptophan from chorismate: step 2/5. Catalyzes the transfer of the phosphoribosyl group of 5-phosphorylribose-1-pyrophosphate (PRPP) to anthranilate to yield N-(5'-phosphoribosyl)-anthranilate (PRA). The chain is Anthranilate phosphoribosyltransferase from Thermomicrobium roseum (strain ATCC 27502 / DSM 5159 / P-2).